Consider the following 91-residue polypeptide: Defensin-like protein 95 (91 aa).

A signal peptide spans methionine 1–glycine 27. Disulfide bonds link cysteine 31-cysteine 76, cysteine 38-cysteine 63, cysteine 47-cysteine 73, and cysteine 51-cysteine 75.

Belongs to the DEFL family.

Its subcellular location is the secreted. The protein is Defensin-like protein 95 of Arabidopsis thaliana (Mouse-ear cress).